A 552-amino-acid chain; its full sequence is MAGUK p55 subfamily member 2 (552 aa).

L27 domains lie at 8–59 (SESA…EETK) and 60–118 (LEAV…YETP). Ser-42 is subject to Phosphoserine. Thr-117 is modified (phosphothreonine). Ser-121 is modified (phosphoserine). The PDZ domain occupies 140 to 219 (MVGIRKTAGE…SVILKILPSY (80 aa)). In terms of domain architecture, SH3 spans 225-293 (PRQVFVKCHF…PSQLLEEKRK (69 aa)). Positions 350-537 (RKTLVLIGAQ…TFRELQTAME (188 aa)) constitute a Guanylate kinase-like domain.

The protein belongs to the MAGUK family. In terms of assembly, can homomultimerise. Interacts with CACNG2. Interacts (via the SH3-Guanylate kinase-like sub-module) with DLG4/PSD95 and DLGAP1/GKAP. Interacts (via the PDZ domain) with CADM1 (via C-terminus). Interacts with KCNN2/SK2 (via N-terminal domain). Interacts with SRC. In terms of processing, phosphorylated by SRC. As to expression, expressed in hippocampal neurons.

The protein resides in the cell projection. The protein localises to the dendrite. It is found in the postsynaptic density. Its subcellular location is the cytoplasm. It localises to the cytoskeleton. The protein resides in the membrane. Postsynaptic MAGUK scaffold protein that links CADM1 cell adhesion molecules to core components of the postsynaptic density. In CA1 pyramidal neurons, required for synaptic KCNN2-containing channel function and long-term potentiation expression. Seems to negatively regulate SRC function in epithelial cells. This chain is MAGUK p55 subfamily member 2, found in Rattus norvegicus (Rat).